Here is a 461-residue protein sequence, read N- to C-terminus: Glycolipid 2-alpha-mannosyltransferase 2 (461 aa).

At 1–12 (MKPSIFYSSRQP) the chain is on the cytoplasmic side. A helical; Signal-anchor for type II membrane protein membrane pass occupies residues 13–35 (YLKYLAIILTTITIYVLTHSSYS). The segment covering 35–52 (SADPNINDVTTKPISETV) has biased composition (polar residues). A disordered region spans residues 35-138 (SADPNINDVT…SSSKDPVKPE (104 aa)). Over 36–461 (ADPNINDVTT…QKPKEWEKYQ (426 aa)) the chain is Lumenal. 2 stretches are compositionally biased toward low complexity: residues 61-70 (SSPEQQQQQP) and 106-116 (PKSSSSSPQQQ). Positions 117-126 (EKQDTKKESE) are enriched in basic and acidic residues. Glu349 acts as the Nucleophile in catalysis.

This sequence belongs to the glycosyltransferase 15 family.

It is found in the golgi apparatus membrane. Functionally, involved in O-glycosylation of cell wall and secreted proteins. Transfers an alpha-D-mannosyl residue from GDP-mannose into lipid-linked oligosaccharide, forming an alpha-(1-&gt;2)-D-mannosyl-D-mannose linkage. Mainly responsible for the addition of the third mannose residue in an O-linked mannose pentamer. Can also substitute for MNT1 by adding the second mannose residue. Important for adherence to host surfaces and for virulence. This chain is Glycolipid 2-alpha-mannosyltransferase 2 (MNT2), found in Candida albicans (strain SC5314 / ATCC MYA-2876) (Yeast).